The chain runs to 331 residues: 6-phosphogluconolactonase (331 aa).

Belongs to the cycloisomerase 2 family.

It carries out the reaction 6-phospho-D-glucono-1,5-lactone + H2O = 6-phospho-D-gluconate + H(+). It functions in the pathway carbohydrate degradation; pentose phosphate pathway; D-ribulose 5-phosphate from D-glucose 6-phosphate (oxidative stage): step 2/3. Functionally, catalyzes the hydrolysis of 6-phosphogluconolactone to 6-phosphogluconate. This chain is 6-phosphogluconolactonase, found in Buchnera aphidicola subsp. Baizongia pistaciae (strain Bp).